The following is a 457-amino-acid chain: Probable ubiquitin carboxyl-terminal hydrolase 16 (457 aa).

The segment at 34-97 (VSSPSVPEGT…DGANDFVDED (64 aa)) is disordered. A compositionally biased stretch (polar residues) spans 45 to 67 (TVLNNPKQSTVSRKSFSAPTSPT). Ser-61 carries the phosphoserine modification. Thr-64 carries the post-translational modification Phosphothreonine. Ser-65 is subject to Phosphoserine. One can recognise a USP domain in the interval 125–429 (PGLVNLGNTC…QAYILQYKRK (305 aa)). The active-site Nucleophile is Cys-134. Catalysis depends on His-388, which acts as the Proton acceptor. The segment at 434-457 (SKHKLNTENTVTKTSNKKRRKISF) is disordered. Over residues 448-457 (SNKKRRKISF) the composition is skewed to basic residues.

This sequence belongs to the peptidase C19 family.

The enzyme catalyses Thiol-dependent hydrolysis of ester, thioester, amide, peptide and isopeptide bonds formed by the C-terminal Gly of ubiquitin (a 76-residue protein attached to proteins as an intracellular targeting signal).. This is Probable ubiquitin carboxyl-terminal hydrolase 16 (ubp16) from Schizosaccharomyces pombe (strain 972 / ATCC 24843) (Fission yeast).